Here is a 411-residue protein sequence, read N- to C-terminus: G2/mitotic-specific cyclin cig2 (411 aa).

Positions 51–60 (RTVLSDVSNV) match the Destruction box motif. Positions 57–89 (VSNVGKNNADEKDTKKAKRSFDESNLSTNEEAD) are disordered. A compositionally biased stretch (basic and acidic residues) spans 64 to 78 (NADEKDTKKAKRSFD). Residues 139 to 265 (EIFEYIRKLD…MLNVLNFDLS (127 aa)) form the Cyclin N-terminal domain. Residues 181–273 (SNFCLMPETL…LSYPSPLNFL (93 aa)) are interaction with pop1.

This sequence belongs to the cyclin family. Cyclin AB subfamily. Associates with cdc2, res2 and rum1. Interacts with pop1 only when phosphorylated. Phosphorylated.

It is found in the nucleus. Its subcellular location is the cytoplasm. The protein resides in the cytoskeleton. The protein localises to the microtubule organizing center. It localises to the spindle pole body. Its function is as follows. Essential for the control of the cell cycle at the G2/M and G1/S (mitosis) transition. Interacts with the cdc2 protein kinase to form MPF. Interaction with res2 promotes the phosphorylation of res1 and inhibits MBF-dependent gene transcription. Forms an autoregulating feedback-inhibition loop with MBF which is important for normal regulation of the cell cycle. G2/M cyclins accumulate steadily during G2 and are abruptly destroyed at mitosis. Negatively regulates conjugation via interacting with cell cycle 'start' genes. Degraded by skp1, pop1 and pop2 in the G2 and M phases of the cell cycle. In Schizosaccharomyces pombe (strain 972 / ATCC 24843) (Fission yeast), this protein is G2/mitotic-specific cyclin cig2 (cig2).